The chain runs to 309 residues: Phosphoserine phosphatase (309 aa).

The active-site Nucleophile is the Asp97. Residues Asp97 and Asp99 each contribute to the Mg(2+) site. Asp99 (proton donor) is an active-site residue. Residues Glu106, Arg142, 186 to 187 (SG), and Lys232 contribute to the substrate site. Position 255 (Asp255) interacts with Mg(2+). Asn258 lines the substrate pocket.

The protein belongs to the HAD-like hydrolase superfamily. SerB family. It depends on Mg(2+) as a cofactor.

The enzyme catalyses O-phospho-L-serine + H2O = L-serine + phosphate. It carries out the reaction O-phospho-D-serine + H2O = D-serine + phosphate. It participates in amino-acid biosynthesis; L-serine biosynthesis; L-serine from 3-phospho-D-glycerate: step 3/3. In Saccharomyces cerevisiae (strain ATCC 204508 / S288c) (Baker's yeast), this protein is Phosphoserine phosphatase (SER2).